Reading from the N-terminus, the 278-residue chain is NAD-capped RNA hydrolase NudC (278 aa).

A substrate-binding site is contributed by R84. Residues C114 and C117 each contribute to the Zn(2+) site. E127 provides a ligand contact to substrate. The Zn(2+) site is built by C132 and C135. Y140 contributes to the substrate binding site. Residues P141–L265 enclose the Nudix hydrolase domain. A174, E190, and E194 together coordinate a divalent metal cation. A Nudix box motif is present at residues G175–G196. Q208–S215 contributes to the substrate binding site. E235 is an a divalent metal cation binding site. A257 serves as a coordination point for substrate.

The protein belongs to the Nudix hydrolase family. NudC subfamily. Homodimer. Mg(2+) serves as cofactor. The cofactor is Mn(2+). Zn(2+) is required as a cofactor.

The enzyme catalyses a 5'-end NAD(+)-phospho-ribonucleoside in mRNA + H2O = a 5'-end phospho-adenosine-phospho-ribonucleoside in mRNA + beta-nicotinamide D-ribonucleotide + 2 H(+). It carries out the reaction NAD(+) + H2O = beta-nicotinamide D-ribonucleotide + AMP + 2 H(+). It catalyses the reaction NADH + H2O = reduced beta-nicotinamide D-ribonucleotide + AMP + 2 H(+). Functionally, mRNA decapping enzyme that specifically removes the nicotinamide adenine dinucleotide (NAD) cap from a subset of mRNAs by hydrolyzing the diphosphate linkage to produce nicotinamide mononucleotide (NMN) and 5' monophosphate mRNA. The NAD-cap is present at the 5'-end of some mRNAs and stabilizes RNA against 5'-processing. Has preference for mRNAs with a 5'-end purine. Catalyzes the hydrolysis of a broad range of dinucleotide pyrophosphates. In Pseudomonas aeruginosa (strain LESB58), this protein is NAD-capped RNA hydrolase NudC.